Here is a 76-residue protein sequence, read N- to C-terminus: Defensin-like protein 155 (76 aa).

The first 27 residues, 1–27 (MAKISCSYLLILMLALSVFSVVEKAKG), serve as a signal peptide directing secretion. Cystine bridges form between Cys31–Cys76, Cys40–Cys59, Cys45–Cys70, and Cys49–Cys72.

This sequence belongs to the DEFL family.

The protein resides in the secreted. The protein is Defensin-like protein 155 (LCR36) of Arabidopsis thaliana (Mouse-ear cress).